Here is a 425-residue protein sequence, read N- to C-terminus: Tyrosine--tRNA ligase (425 aa).

Y37 contributes to the L-tyrosine binding site. The 'HIGH' region signature appears at 42 to 51; sequence PTADSLHLGH. L-tyrosine-binding residues include Y175 and Q179. A 'KMSKS' region motif is present at residues 235–239; that stretch reads KFGKT. Residue K238 participates in ATP binding. The 58-residue stretch at 357-414 folds into the S4 RNA-binding domain; the sequence is ADLQQALVSAELVPSRGQARTMISSNAVTINGEKQADPEYTFSASDRLFDRYTLLRRG.

Belongs to the class-I aminoacyl-tRNA synthetase family. TyrS type 1 subfamily. In terms of assembly, homodimer.

The protein resides in the cytoplasm. The enzyme catalyses tRNA(Tyr) + L-tyrosine + ATP = L-tyrosyl-tRNA(Tyr) + AMP + diphosphate + H(+). Functionally, catalyzes the attachment of tyrosine to tRNA(Tyr) in a two-step reaction: tyrosine is first activated by ATP to form Tyr-AMP and then transferred to the acceptor end of tRNA(Tyr). The sequence is that of Tyrosine--tRNA ligase from Pectobacterium carotovorum subsp. carotovorum (strain PC1).